Consider the following 271-residue polypeptide: Vacuolar arginine/histidine antiporter stm1 (271 aa).

Residues 14 to 80 (LTELSSFLGA…GNVSSTVLVL (67 aa)) enclose the PQ-loop 1 domain. Helical transmembrane passes span 17-37 (LSSF…IPQL), 49-69 (ISDL…LGSI), and 77-97 (VLVL…QIYY). S119 bears the Phosphoserine mark. 4 consecutive transmembrane segments (helical) span residues 144-164 (FGVM…IISS), 178-198 (PFTA…PQII), 211-231 (IIFF…ILVF), and 245-265 (PWIL…YQFI). Residues 185–239 (SSVLYFCARIPQIIKNHKAKSTEGLSIIFFVLASVGNTSYAFSILVFPASDYLNY) form the PQ-loop 2 domain.

Belongs to the laat-1 family.

It is found in the vacuole membrane. It carries out the reaction L-histidine(out) + L-arginine(in) = L-histidine(in) + L-arginine(out). In terms of biological role, amino acid transporter that moves basic amino acids across the vacuolar membrane. Appears to function as an arginine/histidine antiporter. The protein is Vacuolar arginine/histidine antiporter stm1 (stm1) of Schizosaccharomyces pombe (strain 972 / ATCC 24843) (Fission yeast).